We begin with the raw amino-acid sequence, 318 residues long: N-acetyl-gamma-glutamyl-phosphate reductase (318 aa).

Cysteine 132 is a catalytic residue.

It belongs to the NAGSA dehydrogenase family. Type 1 subfamily.

Its subcellular location is the cytoplasm. It carries out the reaction N-acetyl-L-glutamate 5-semialdehyde + phosphate + NADP(+) = N-acetyl-L-glutamyl 5-phosphate + NADPH + H(+). Its pathway is amino-acid biosynthesis; L-arginine biosynthesis; N(2)-acetyl-L-ornithine from L-glutamate: step 3/4. Its function is as follows. Catalyzes the NADPH-dependent reduction of N-acetyl-5-glutamyl phosphate to yield N-acetyl-L-glutamate 5-semialdehyde. This Azobacteroides pseudotrichonymphae genomovar. CFP2 protein is N-acetyl-gamma-glutamyl-phosphate reductase.